Here is a 134-residue protein sequence, read N- to C-terminus: Proline-rich nuclear receptor coactivator 2 (134 aa).

Residues 1–74 (MGGGERYNIP…NNSNWNASLS (74 aa)) are disordered. 2 stretches are compositionally biased toward polar residues: residues 11–24 (DPQS…QQQH) and 52–61 (SAVQNGGKTK). Over residues 62 to 74 (SLSNNSNWNASLS) the composition is skewed to low complexity. An SH3-binding motif is present at residues 94-100 (SEPPSPS).

It belongs to the PNRC family. PNRC2 subfamily. Interacts with UPF1/RENT1; preferentially interacts with hyperphosphorylated form. Interacts with DCP1A. Interacts with many nuclear receptors including ESR1, ESRRA, ESRRG, NR3C1/GR, NR5A1, PGR, TR, RAR and RXR.

The protein resides in the nucleus. Its subcellular location is the cytoplasm. It is found in the P-body. In terms of biological role, involved in nonsense-mediated mRNA decay (NMD) by acting as a bridge between the mRNA decapping complex and the NMD machinery. May act by targeting the NMD machinery to the P-body and recruiting the decapping machinery to aberrant mRNAs. Required for UPF1/RENT1 localization to the P-body. Plays a role in glucocorticoid receptor-mediated mRNA degradation by interacting with the glucocorticoid receptor NR3C1 in a ligand-dependent manner when it is bound to the 5' UTR of target mRNAs and recruiting the RNA helicase UPF1 and the mRNA-decapping enzyme DCP1A, leading to RNA decay. Also acts as a nuclear receptor coactivator. May play a role in controlling the energy balance between energy storage and energy expenditure. The protein is Proline-rich nuclear receptor coactivator 2 (Pnrc2) of Rattus norvegicus (Rat).